A 181-amino-acid polypeptide reads, in one-letter code: Ferredoxin C 2, chloroplastic (181 aa).

Residues 1–44 (MALILPCTFCTSLQKKNFPINRRYITNFRRGATTATCEFRIPVE) constitute a chloroplast transit peptide. The 2Fe-2S ferredoxin-type domain occupies 59–151 (HKVTVHDRQR…DLEVETQDED (93 aa)). Residues cysteine 97, cysteine 102, cysteine 105, and cysteine 135 each contribute to the [2Fe-2S] cluster site.

The protein belongs to the 2Fe2S plant-type ferredoxin family. [2Fe-2S] cluster serves as cofactor.

Its subcellular location is the plastid. The protein resides in the chloroplast. Its function is as follows. Ferredoxins are iron-sulfur proteins that transfer electrons in a wide variety of metabolic reactions. Mediates alternative electron partitioning in conditions of acceptor limitation at photosystem I. The protein is Ferredoxin C 2, chloroplastic of Arabidopsis thaliana (Mouse-ear cress).